The chain runs to 187 residues: MSLLPTGTLILLVLFILVLITMTKNTSSLNVTKPVSAIAVLEGPVKGTVRFVEESSKVKISVDISGLKPNRKHGFHVHEAGDLTDGCTSACAHFNPFGTAHGGPDSKIRHVGDLGNILADKNGKAKYSFYDSMIKLRGKCNIIGRAIVVHADTDDLGLGGNAESLKTGNAGKRIGCAVIGYAKENFC.

Positions 1–21 (MSLLPTGTLILLVLFILVLIT) are cleaved as a signal peptide. Cu cation is bound by residues histidine 76, histidine 78, and histidine 93. The cysteines at positions 87 and 176 are disulfide-linked. Zn(2+) contacts are provided by histidine 93, histidine 101, histidine 110, and aspartate 113. Residue histidine 150 coordinates Cu cation.

It belongs to the Cu-Zn superoxide dismutase family. Cu cation is required as a cofactor. It depends on Zn(2+) as a cofactor.

It catalyses the reaction 2 superoxide + 2 H(+) = H2O2 + O2. Its function is as follows. Destroys radicals which are normally produced within the cells and which are toxic to biological systems. The chain is Superoxide dismutase [Cu-Zn] from Chlorella (PBCV-1).